The primary structure comprises 204 residues: Transcriptional regulator GfcR 1 (204 aa).

Belongs to the purine/pyrimidine phosphoribosyltransferase family. GfcR subfamily.

This chain is Transcriptional regulator GfcR 1, found in Methanosarcina barkeri (strain Fusaro / DSM 804).